Here is a 91-residue protein sequence, read N- to C-terminus: Succinate dehydrogenase assembly factor 1A, mitochondrial (91 aa).

This sequence belongs to the complex I LYR family. SDHAF1 subfamily. As to quaternary structure, interacts with the iron-sulfur protein subunit within the SDH catalytic dimer.

The protein resides in the mitochondrion matrix. Plays an essential role in the assembly of succinate dehydrogenase (SDH), an enzyme complex (also referred to as respiratory complex II) that is a component of both the tricarboxylic acid (TCA) cycle and the mitochondrial electron transport chain, and which couples the oxidation of succinate to fumarate with the reduction of ubiquinone (coenzyme Q) to ubiquinol. Promotes maturation of the iron-sulfur protein subunit of the SDH catalytic dimer, protecting it from the deleterious effects of oxidants. May act together with SDHAF3. The polypeptide is Succinate dehydrogenase assembly factor 1A, mitochondrial (Dictyostelium discoideum (Social amoeba)).